Reading from the N-terminus, the 374-residue chain is DNA replication and repair protein RecF (374 aa).

34–41 (GNNGAGKT) contributes to the ATP binding site.

The protein belongs to the RecF family.

Its subcellular location is the cytoplasm. In terms of biological role, the RecF protein is involved in DNA metabolism; it is required for DNA replication and normal SOS inducibility. RecF binds preferentially to single-stranded, linear DNA. It also seems to bind ATP. This chain is DNA replication and repair protein RecF, found in Rhizobium etli (strain CIAT 652).